Consider the following 134-residue polypeptide: Arginine decarboxylase proenzyme (134 aa).

S82 acts as the Schiff-base intermediate with substrate; via pyruvic acid in catalysis. The residue at position 82 (S82) is a Pyruvic acid (Ser); by autocatalysis. The active-site Proton acceptor; for processing activity is H87. C102 acts as the Proton donor; for catalytic activity in catalysis.

The protein belongs to the prokaryotic AdoMetDC family. Type 1 subfamily. Heterooctamer of four alpha and four beta chains arranged as a tetramer of alpha/beta heterodimers. Pyruvate serves as cofactor. Post-translationally, is synthesized initially as an inactive proenzyme. Formation of the active enzyme involves a self-maturation process in which the active site pyruvoyl group is generated from an internal serine residue via an autocatalytic post-translational modification. Two non-identical subunits are generated from the proenzyme in this reaction, and the pyruvate is formed at the N-terminus of the alpha chain, which is derived from the carboxyl end of the proenzyme. The post-translation cleavage follows an unusual pathway, termed non-hydrolytic serinolysis, in which the side chain hydroxyl group of the serine supplies its oxygen atom to form the C-terminus of the beta chain, while the remainder of the serine residue undergoes an oxidative deamination to produce ammonia and the pyruvoyl group blocking the N-terminus of the alpha chain.

It carries out the reaction L-arginine + H(+) = agmatine + CO2. Its pathway is amine and polyamine biosynthesis; agmatine biosynthesis; agmatine from L-arginine: step 1/1. Highly competitively inhibited by L-argininamide and L-arginine methyl ester. Also inhibited by alpha-difluoromethylarginine. Is not stimulated by potassium chloride as observed for other decarboxylases. Specifically catalyzes the decarboxylation of L-arginine to agmatine. Is also able to decarboxylate L-canavanine, although less efficiently. Has no S-adenosylmethionine decarboxylase (AdoMetDC) activity. This chain is Arginine decarboxylase proenzyme, found in Saccharolobus solfataricus (strain ATCC 35092 / DSM 1617 / JCM 11322 / P2) (Sulfolobus solfataricus).